The following is a 439-amino-acid chain: MKKGKADPCNYLFRRARVIDPARDLDAVADVLVVDGILTDIKPNIDLPSDRLAHFAVIDASEKWIVPGLIDMHVHLREPGEEYKETIATGTMAAVAGGYTAVACMPNTKPVNDCAAVTEYILERAREQGHCRVLPVGAVSSGLEGRSLAEFGELKGSGAVAVTDDGRPVANSMLMRRALEYAKNFDLPVISHAEDPALSEGGLMNEGPTSTLLGLHGIPKAAEEVMVARDLALAELTGARLHIAHVSTAGAVRMIGEAKSRGVPVTAETAPHYFTLTDDRLMTFDTLYKVNPPIRGPADVEAIKRGLADGTIDAVATDHAPHSSIEKDTEFEYAANGIIGLESALPLILELVREKTLTPSQAVAKVSCNPARILGLPLGTLLLNQRACMTYLDPEFYFVLDCTTFRSKSRNCPFHGQPTRGRALMTFFNGKVAFSRLSK.

The Zn(2+) site is built by H73 and H75. Residues 75-77 (HLR) and N107 contribute to the substrate site. Positions 165, 192, and 245 each coordinate Zn(2+). Position 291 (N291) interacts with substrate. Position 318 (D318) interacts with Zn(2+). The active site involves D318. H322 contributes to the substrate binding site.

This sequence belongs to the metallo-dependent hydrolases superfamily. DHOase family. Class I DHOase subfamily. Requires Zn(2+) as cofactor.

It catalyses the reaction (S)-dihydroorotate + H2O = N-carbamoyl-L-aspartate + H(+). It functions in the pathway pyrimidine metabolism; UMP biosynthesis via de novo pathway; (S)-dihydroorotate from bicarbonate: step 3/3. Its function is as follows. Catalyzes the reversible cyclization of carbamoyl aspartate to dihydroorotate. This Syntrophobacter fumaroxidans (strain DSM 10017 / MPOB) protein is Dihydroorotase.